The sequence spans 235 residues: Protein CIST1 (235 aa).

The first 31 residues, 1–31 (MASSQPPLPPPPPPLLLLALLLLLKVSDTSS), serve as a signal peptide directing secretion. Composition is skewed to low complexity over residues 28–61 (DTSSSVSTATSTASETDNLTSKPLTSSFSSSSPT) and 76–110 (STSHPDSSSSESTISHSPSNSGTTSTTQPTSSQPE). Residues 28 to 159 (DTSSSVSTAT…TGPPSVSLAT (132 aa)) form a disordered region. At 32–184 (SVSTATSTAS…GVPRLHRNPG (153 aa)) the chain is on the extracellular side. N-linked (GlcNAc...) asparagine glycosylation occurs at Asn45. The span at 114–136 (HPSSGSPSSEHTVTSPSLGSVSL) shows a compositional bias: polar residues. A helical membrane pass occupies residues 185 to 205 (VVVAVCLLVSALLIGGAIMAV). Residues 206–235 (RRCHNGVSEFQKLDEGLVSRRSSSAHHTLP) are Cytoplasmic-facing.

Highly expressed in large intestine, small intestine, rumen, and kidney tissues.

It is found in the membrane. This chain is Protein CIST1 (CIST1), found in Bos taurus (Bovine).